A 644-amino-acid polypeptide reads, in one-letter code: MGKIIGIDLGTTNSCVAVMESGKPKVIENSEGARTTPSIVAYTEDGEILVGASAKRQAVTNPKNTLFAVKRLIGRRFNEEMVQRDIKMVPYTIIKADNNDAWIEVRGKKVAPPEVSAQVLMKMKKTAEDYLGEPVTEAVITVPAYFNDSQRQATKDAGRIAGLEVKRIINEPTAAALAFGMDKKEGDRKIAVYDLGGGTFDISIIEIAEVEGEHQFEVLATNGDTFLGGEDFDARIIEYLVDEFKKENGIDLKKDMLALQRLKDSAEKAKIELSSSQQTEVNLPYITADASGPKHLAVRITRAKLESLVEDLITRTVEPCRIAIKDAGIKISDIDDVILVGGQTRMPKVQEKVKEIFAKEPRKDVNPDEAVAVGAAIQGGVLQGAVKDVLLLDVTPLSLGIETLGGVMTKLIQKNTTIPTKANQVFSTADDNQTAVTIHVLQGEREMASGNKSLGQFNLADIPPAPRGMPQIEVTFDIDSNGILHVSAKDKATGKESKIKIQASSGLSEEEVQRMVKDAEAHAEEDHKAMELVTARNQCDAMIHSVQKTMKEHGDKLADEEKSKIESALKEAEDALKSGDKETIEAKTQALAEASHKLAEKMYSQGQGPQAGPGEEPSGQSGGTEKPVEGEVVDAEFEEVKNKK.

T199 is subject to Phosphothreonine; by autocatalysis. Residues 589-644 are disordered; sequence QALAEASHKLAEKMYSQGQGPQAGPGEEPSGQSGGTEKPVEGEVVDAEFEEVKNKK. Low complexity predominate over residues 604 to 619; sequence SQGQGPQAGPGEEPSG.

Belongs to the heat shock protein 70 family.

Functionally, acts as a chaperone. This is Chaperone protein DnaK from Nitrosospira multiformis (strain ATCC 25196 / NCIMB 11849 / C 71).